The chain runs to 365 residues: Phospho-N-acetylmuramoyl-pentapeptide-transferase (365 aa).

Helical transmembrane passes span 22–42 (YVSV…LFLG), 74–94 (TMGG…WGSL), 95–115 (SSIY…IGFF), 134–154 (KFAL…YLLS), 169–189 (LHIP…INGS), 201–221 (GLAI…AYIQ), 240–260 (LAEV…FLWF), 268–288 (FMGD…AVMI), 292–312 (LIFF…MLQV), and 342–362 (KVVI…LVAI).

The protein belongs to the glycosyltransferase 4 family. MraY subfamily. It depends on Mg(2+) as a cofactor.

The protein resides in the cell inner membrane. The enzyme catalyses UDP-N-acetyl-alpha-D-muramoyl-L-alanyl-gamma-D-glutamyl-meso-2,6-diaminopimeloyl-D-alanyl-D-alanine + di-trans,octa-cis-undecaprenyl phosphate = di-trans,octa-cis-undecaprenyl diphospho-N-acetyl-alpha-D-muramoyl-L-alanyl-D-glutamyl-meso-2,6-diaminopimeloyl-D-alanyl-D-alanine + UMP. It participates in cell wall biogenesis; peptidoglycan biosynthesis. In terms of biological role, catalyzes the initial step of the lipid cycle reactions in the biosynthesis of the cell wall peptidoglycan: transfers peptidoglycan precursor phospho-MurNAc-pentapeptide from UDP-MurNAc-pentapeptide onto the lipid carrier undecaprenyl phosphate, yielding undecaprenyl-pyrophosphoryl-MurNAc-pentapeptide, known as lipid I. In Francisella philomiragia subsp. philomiragia (strain ATCC 25017 / CCUG 19701 / FSC 153 / O#319-036), this protein is Phospho-N-acetylmuramoyl-pentapeptide-transferase.